We begin with the raw amino-acid sequence, 288 residues long: Eukaryotic translation initiation factor 3 subunit G (288 aa).

The segment at 1-35 is disordered; it reads MSRVANNRDWADDEDLEDSNELPQSTTTTNKDGTQ. The span at 11 to 20 shows a compositional bias: acidic residues; the sequence is ADDEDLEDSN. Residues 21 to 35 show a composition bias toward polar residues; it reads ELPQSTTTTNKDGTQ. Residues 208–286 form the RRM domain; the sequence is ATLRVTNVSE…LILRVEFAKK (79 aa).

The protein belongs to the eIF-3 subunit G family. Component of the eukaryotic translation initiation factor 3 (eIF-3) complex.

It is found in the cytoplasm. Its function is as follows. RNA-binding component of the eukaryotic translation initiation factor 3 (eIF-3) complex, which is involved in protein synthesis of a specialized repertoire of mRNAs and, together with other initiation factors, stimulates binding of mRNA and methionyl-tRNAi to the 40S ribosome. The eIF-3 complex specifically targets and initiates translation of a subset of mRNAs involved in cell proliferation. This subunit can bind 18S rRNA. The protein is Eukaryotic translation initiation factor 3 subunit G (tif35) of Botryotinia fuckeliana (strain B05.10) (Noble rot fungus).